The chain runs to 627 residues: tRNA uridine 5-carboxymethylaminomethyl modification enzyme MnmG (627 aa).

Residues 13–18 (GGGHAG), Val-125, and Ser-180 each bind FAD. 274–288 (GPRYCPSIEDKVVRF) is an NAD(+) binding site. Gln-371 lines the FAD pocket.

The protein belongs to the MnmG family. In terms of assembly, homodimer. Heterotetramer of two MnmE and two MnmG subunits. FAD is required as a cofactor.

The protein resides in the cytoplasm. Functionally, NAD-binding protein involved in the addition of a carboxymethylaminomethyl (cmnm) group at the wobble position (U34) of certain tRNAs, forming tRNA-cmnm(5)s(2)U34. This is tRNA uridine 5-carboxymethylaminomethyl modification enzyme MnmG from Francisella tularensis subsp. tularensis (strain WY96-3418).